We begin with the raw amino-acid sequence, 399 residues long: Chaperone protein DnaJ 1 (399 aa).

The J domain maps to 10–75 (DYYKVLGVPK…KKRKEYDEAR (66 aa)). Residues 166-244 (GATVPLRMSS…CKGSGRAKSS (79 aa)) form a CR-type zinc finger. Residues C179, C182, C195, C198, C218, C221, C232, and C235 each contribute to the Zn(2+) site. 4 CXXCXGXG motif repeats span residues 179–186 (CKACSGTG), 195–202 (CPTCVGTG), 218–225 (CPDCKGRG), and 232–239 (CEVCKGSG).

This sequence belongs to the DnaJ family. Homodimer. Zn(2+) serves as cofactor.

The protein localises to the cytoplasm. Functionally, participates actively in the response to hyperosmotic and heat shock by preventing the aggregation of stress-denatured proteins and by disaggregating proteins, also in an autonomous, DnaK-independent fashion. Unfolded proteins bind initially to DnaJ; upon interaction with the DnaJ-bound protein, DnaK hydrolyzes its bound ATP, resulting in the formation of a stable complex. GrpE releases ADP from DnaK; ATP binding to DnaK triggers the release of the substrate protein, thus completing the reaction cycle. Several rounds of ATP-dependent interactions between DnaJ, DnaK and GrpE are required for fully efficient folding. Also involved, together with DnaK and GrpE, in the DNA replication of plasmids through activation of initiation proteins. This Streptomyces coelicolor (strain ATCC BAA-471 / A3(2) / M145) protein is Chaperone protein DnaJ 1.